The following is a 392-amino-acid chain: Small ribosomal subunit protein uS9m (392 aa).

The segment covering 8-25 has biased composition (low complexity); it reads RSSRAMSSASPASASDSD. Residues 8-27 form a disordered region; the sequence is RSSRAMSSASPASASDSDTS.

The protein belongs to the universal ribosomal protein uS9 family. As to quaternary structure, component of the mitochondrial ribosome small subunit (28S) which comprises a 12S rRNA and about 30 distinct proteins.

Its subcellular location is the mitochondrion. The polypeptide is Small ribosomal subunit protein uS9m (mrps-9) (Caenorhabditis elegans).